We begin with the raw amino-acid sequence, 233 residues long: Hydroxyacylglutathione hydrolase (233 aa).

Histidine 52, histidine 54, aspartate 56, histidine 57, histidine 108, aspartate 125, and histidine 163 together coordinate Zn(2+).

Belongs to the metallo-beta-lactamase superfamily. Glyoxalase II family. As to quaternary structure, monomer. Requires Zn(2+) as cofactor.

It catalyses the reaction an S-(2-hydroxyacyl)glutathione + H2O = a 2-hydroxy carboxylate + glutathione + H(+). It functions in the pathway secondary metabolite metabolism; methylglyoxal degradation; (R)-lactate from methylglyoxal: step 2/2. Thiolesterase that catalyzes the hydrolysis of S-D-lactoyl-glutathione to form glutathione and D-lactic acid. The chain is Hydroxyacylglutathione hydrolase from Pasteurella multocida (strain Pm70).